A 705-amino-acid chain; its full sequence is Glycine--tRNA ligase beta subunit (705 aa).

It belongs to the class-II aminoacyl-tRNA synthetase family. As to quaternary structure, tetramer of two alpha and two beta subunits.

It localises to the cytoplasm. It carries out the reaction tRNA(Gly) + glycine + ATP = glycyl-tRNA(Gly) + AMP + diphosphate. This Persephonella marina (strain DSM 14350 / EX-H1) protein is Glycine--tRNA ligase beta subunit.